The primary structure comprises 52 residues: LIRRPLLSFLAPSRIFDQTFGEHLQESELLPASPGFSSFLMRSPIFRMPSWV.

Belongs to the small heat shock protein (HSP20) family. As to quaternary structure, homodimer. Aggregates with homologous proteins, including alpha-A-crystallin and the small heat shock protein HSPB1, to form large heteromeric complexes.

In terms of biological role, may contribute to the transparency and refractive index of the lens. This is Alpha-crystallin B chain (CRYAB) from Eudromia elegans (Elegant crested-tinamou).